We begin with the raw amino-acid sequence, 485 residues long: Amidophosphoribosyltransferase, chloroplastic (485 aa).

A chloroplast-targeting transit peptide spans lysine 1–glutamate 18. Cysteine 19 functions as the Nucleophile in the catalytic mechanism. In terms of domain architecture, Glutamine amidotransferase type-2 spans cysteine 19–threonine 237. A [4Fe-4S] cluster-binding site is contributed by cysteine 253. Positions 300, 362, and 363 each coordinate Mg(2+). Residues cysteine 399, cysteine 450, and cysteine 453 each coordinate [4Fe-4S] cluster.

This sequence in the C-terminal section; belongs to the purine/pyrimidine phosphoribosyltransferase family. The cofactor is Mg(2+). [4Fe-4S] cluster serves as cofactor.

The protein resides in the plastid. It is found in the chloroplast. It carries out the reaction 5-phospho-beta-D-ribosylamine + L-glutamate + diphosphate = 5-phospho-alpha-D-ribose 1-diphosphate + L-glutamine + H2O. Its pathway is purine metabolism; IMP biosynthesis via de novo pathway; N(1)-(5-phospho-D-ribosyl)glycinamide from 5-phospho-alpha-D-ribose 1-diphosphate: step 1/2. This Vigna aconitifolia (Moth bean) protein is Amidophosphoribosyltransferase, chloroplastic (PUR1).